We begin with the raw amino-acid sequence, 300 residues long: Phospholipase A1 (300 aa).

A disulfide bond links Cys-4 and Cys-87. Ser-137 acts as the Nucleophile in catalysis. Asp-165 serves as the catalytic Charge relay system. 2 disulfides stabilise this stretch: Cys-176–Cys-181 and Cys-218–Cys-227. His-229 functions as the Charge relay system in the catalytic mechanism. Cystine bridges form between Cys-244–Cys-268, Cys-245–Cys-293, and Cys-261–Cys-266.

This sequence belongs to the AB hydrolase superfamily. Lipase family. In terms of tissue distribution, expressed by the venom gland.

The protein localises to the secreted. It carries out the reaction a 1,2-diacyl-sn-glycero-3-phosphocholine + H2O = a 2-acyl-sn-glycero-3-phosphocholine + a fatty acid + H(+). Local inflammatory effects are inhibited by antiserotonin drugs (cyproheptadine and methysergide), indomethacin, betamethasone, and antihistamine (chlorpheniramine). In terms of biological role, catalyzes the hydrolysis of phosphatidylcholine with phospholipase A1 activity. Shows potent hemolytic activity that is responsible for its lethal effect. May act as an allergen. In vivo, induces local inflammatory effects. The chain is Phospholipase A1 from Vespa basalis (Hornet).